We begin with the raw amino-acid sequence, 97 residues long: Co-chaperonin GroES (97 aa).

The protein belongs to the GroES chaperonin family. As to quaternary structure, heptamer of 7 subunits arranged in a ring. Interacts with the chaperonin GroEL.

The protein localises to the cytoplasm. Its function is as follows. Together with the chaperonin GroEL, plays an essential role in assisting protein folding. The GroEL-GroES system forms a nano-cage that allows encapsulation of the non-native substrate proteins and provides a physical environment optimized to promote and accelerate protein folding. GroES binds to the apical surface of the GroEL ring, thereby capping the opening of the GroEL channel. The polypeptide is Co-chaperonin GroES (Salmonella agona (strain SL483)).